Consider the following 370-residue polypeptide: MEWSTLTTIFDTSLAVVFTWVAYKTGQIIWKYTPYSYPNARIRAMEARLLTDQRFSELAESKSLQNFVVSLEDTDYGKRLTSLQSYNIEDVERALDLSLVDVIELMVKIMPKRIKGLFEIMLEEWDVRNIINVVKAKLSNMPPQDFIMPAGKMLQKVKAMAEAKTMEEMLVILEGTDYEEPLRRLLLNEITLQEFELELYKVHYSKLLRYVNSRKGEEKIIASEFVNMLIDYTNISTLLRAKLSSLAQEDIRKLIIPGGTLSKSTIEAMINSEDVVMALGELEGTKYGEVLREVREAVESGNIESVEIALRKYILRRMKELSQFYPLSVAVAVAYLLQKESEVRKLKAIAKLIEDGVKPEKIKEMVGELA.

The protein belongs to the V-ATPase V0D/AC39 subunit family. In terms of assembly, has multiple subunits with at least A(3), B(3), C, D, E, F, H, I and proteolipid K(x).

It is found in the cell membrane. Component of the A-type ATP synthase that produces ATP from ADP in the presence of a proton gradient across the membrane. This is A-type ATP synthase subunit C from Pyrococcus abyssi (strain GE5 / Orsay).